Consider the following 497-residue polypeptide: Serine/threonine-protein kinase cst-1 (497 aa).

The disordered stretch occupies residues 1 to 27 (MPPSTDSSRRNSEEGSSDGFKLDSSAL). A Protein kinase domain is found at 35–286 (FDIVGKLGEG…ALRLCEHTFI (252 aa)). ATP is bound by residues 41-49 (LGEGSYGSV) and Lys-64. The Proton acceptor role is filled by Asp-154. The interval 367–416 (KSAYIPGSSKNGNSPRVQPPGHTASASDPSKNQPFAQDGTGPNFQLGTSE) is disordered. Polar residues predominate over residues 390 to 416 (ASASDPSKNQPFAQDGTGPNFQLGTSE). Residues 446–493 (FEFLRNITLDELIRRKESLDSEMEEEIRELQRRYKTKRQPILDVIEIK) form the SARAH domain. Positions 450–486 (RNITLDELIRRKESLDSEMEEEIRELQRRYKTKRQPI) form a coiled coil.

The protein belongs to the protein kinase superfamily. STE Ser/Thr protein kinase family. STE20 subfamily. Interacts with rsf-1 (via SARAH domain); the interaction is required for the phosphorylation of cst-1. Requires Mg(2+) as cofactor. Proteolytically cleaved by caspase-3 during apoptosis which results in kinase activation. In terms of processing, phosphorylated. In terms of tissue distribution, widely expressed in epidermal cells.

The catalysed reaction is L-seryl-[protein] + ATP = O-phospho-L-seryl-[protein] + ADP + H(+). It catalyses the reaction L-threonyl-[protein] + ATP = O-phospho-L-threonyl-[protein] + ADP + H(+). Functionally, serine/threonine-protein kinase which extends lifespan and delays tissue aging, probably by activating daf-16. This Caenorhabditis elegans protein is Serine/threonine-protein kinase cst-1.